The sequence spans 188 residues: Probable nicotinate-nucleotide adenylyltransferase (188 aa).

Belongs to the NadD family.

The enzyme catalyses nicotinate beta-D-ribonucleotide + ATP + H(+) = deamido-NAD(+) + diphosphate. Its pathway is cofactor biosynthesis; NAD(+) biosynthesis; deamido-NAD(+) from nicotinate D-ribonucleotide: step 1/1. Its function is as follows. Catalyzes the reversible adenylation of nicotinate mononucleotide (NaMN) to nicotinic acid adenine dinucleotide (NaAD). The polypeptide is Probable nicotinate-nucleotide adenylyltransferase (Salinispora arenicola (strain CNS-205)).